The primary structure comprises 213 residues: ATP phosphoribosyltransferase (213 aa).

The protein belongs to the ATP phosphoribosyltransferase family. Short subfamily. Heteromultimer composed of HisG and HisZ subunits.

It is found in the cytoplasm. It catalyses the reaction 1-(5-phospho-beta-D-ribosyl)-ATP + diphosphate = 5-phospho-alpha-D-ribose 1-diphosphate + ATP. The protein operates within amino-acid biosynthesis; L-histidine biosynthesis; L-histidine from 5-phospho-alpha-D-ribose 1-diphosphate: step 1/9. In terms of biological role, catalyzes the condensation of ATP and 5-phosphoribose 1-diphosphate to form N'-(5'-phosphoribosyl)-ATP (PR-ATP). Has a crucial role in the pathway because the rate of histidine biosynthesis seems to be controlled primarily by regulation of HisG enzymatic activity. In Thermoanaerobacter pseudethanolicus (strain ATCC 33223 / 39E) (Clostridium thermohydrosulfuricum), this protein is ATP phosphoribosyltransferase.